The chain runs to 439 residues: Proline--tRNA ligase (439 aa).

It belongs to the class-II aminoacyl-tRNA synthetase family. ProS type 2 subfamily. In terms of assembly, homodimer.

It is found in the cytoplasm. It catalyses the reaction tRNA(Pro) + L-proline + ATP = L-prolyl-tRNA(Pro) + AMP + diphosphate. Functionally, catalyzes the attachment of proline to tRNA(Pro) in a two-step reaction: proline is first activated by ATP to form Pro-AMP and then transferred to the acceptor end of tRNA(Pro). The polypeptide is Proline--tRNA ligase (Parvibaculum lavamentivorans (strain DS-1 / DSM 13023 / NCIMB 13966)).